The sequence spans 351 residues: Methylthioribose-1-phosphate isomerase (351 aa).

Residues 51–53 (RGA), R94, and Q199 contribute to the substrate site. D240 serves as the catalytic Proton donor. Position 250–251 (250–251 (NK)) interacts with substrate.

The protein belongs to the EIF-2B alpha/beta/delta subunits family. MtnA subfamily. In terms of assembly, homodimer.

It carries out the reaction 5-(methylsulfanyl)-alpha-D-ribose 1-phosphate = 5-(methylsulfanyl)-D-ribulose 1-phosphate. Its pathway is amino-acid biosynthesis; L-methionine biosynthesis via salvage pathway; L-methionine from S-methyl-5-thio-alpha-D-ribose 1-phosphate: step 1/6. Catalyzes the interconversion of methylthioribose-1-phosphate (MTR-1-P) into methylthioribulose-1-phosphate (MTRu-1-P). The sequence is that of Methylthioribose-1-phosphate isomerase from Bacillus cereus (strain ZK / E33L).